A 94-amino-acid chain; its full sequence is uncharacterized protein (94 aa).

The signal sequence occupies residues 1–25 (MRAAIAVLFIALVGLATYHLVMSQA).

This is an uncharacterized protein from Archaeoglobus fulgidus (strain ATCC 49558 / DSM 4304 / JCM 9628 / NBRC 100126 / VC-16).